Here is a 265-residue protein sequence, read N- to C-terminus: Putative methyltransferase 235L (265 aa).

The signal sequence occupies residues 1 to 17 (MDICICYFFTILTTISC).

The protein belongs to the methyltransferase superfamily.

This Acheta domesticus (House cricket) protein is Putative methyltransferase 235L.